The following is a 394-amino-acid chain: MSKETFQRTKPHINIGTIGHVDHGKTTLTAAITRALSAEGLANFCDYSSIDNTPEEKARGITINASHVEYETPNRHYAHVDCPGHADYVKNMITGAAQMDGAILVVSATDGAMPQTKEHILLARQVGVPYIVVFLNKIDMISQEDAELVDLVEMELSELLEEKGYKGCPIIRGSALKALEGDASYVEKIRELMQAVDDNIPTPEREVDKPFLMPIEDVFSISGRGTVVTGRIERGVVKVGDKVQIVGLRDTRETIVTGVEMFRKELPEGQAGENVGLLLRGIGKNDVERGMVICQPNSVKSHTQFKGTVYILQKEEGGRHKPFFTGYRPQFFFRTTDVTGVVTLPEGVEMVMPGDNVEFDVQLISPVALEEGMRFAIREGGRTIGAGTISKIIA.

In terms of domain architecture, tr-type G spans 10-204 (KPHINIGTIG…AVDDNIPTPE (195 aa)). The G1 stretch occupies residues 19 to 26 (GHVDHGKT). 19 to 26 (GHVDHGKT) lines the GTP pocket. Mg(2+) is bound at residue Thr-26. A G2 region spans residues 60–64 (GITIN). Residues 81–84 (DCPG) are G3. Residues 81–85 (DCPGH) and 136–139 (NKID) each bind GTP. A G4 region spans residues 136 to 139 (NKID). The G5 stretch occupies residues 174-176 (SAL).

Belongs to the TRAFAC class translation factor GTPase superfamily. Classic translation factor GTPase family. EF-Tu/EF-1A subfamily. As to quaternary structure, monomer.

It is found in the cytoplasm. The catalysed reaction is GTP + H2O = GDP + phosphate + H(+). In terms of biological role, GTP hydrolase that promotes the GTP-dependent binding of aminoacyl-tRNA to the A-site of ribosomes during protein biosynthesis. The chain is Elongation factor Tu from Chlamydia abortus (strain DSM 27085 / S26/3) (Chlamydophila abortus).